We begin with the raw amino-acid sequence, 485 residues long: Cysteine--tRNA ligase (485 aa).

Cys-29 is a Zn(2+) binding site. Positions 31-41 match the 'HIGH' region motif; the sequence is VTVYDHCHIGH. Residues Cys-209, His-234, and Glu-238 each coordinate Zn(2+). Residues 266–270 carry the 'KMSKS' region motif; that stretch reads KMSKS. Residue Lys-269 participates in ATP binding.

It belongs to the class-I aminoacyl-tRNA synthetase family. As to quaternary structure, monomer. Zn(2+) serves as cofactor.

The protein resides in the cytoplasm. The catalysed reaction is tRNA(Cys) + L-cysteine + ATP = L-cysteinyl-tRNA(Cys) + AMP + diphosphate. In Geobacter metallireducens (strain ATCC 53774 / DSM 7210 / GS-15), this protein is Cysteine--tRNA ligase.